The primary structure comprises 377 residues: Transmembrane protein 237A (377 aa).

Basic and acidic residues-rich tracts occupy residues 1 to 11 (MCVTSRADKMP), 43 to 64 (LESR…DNPP), and 74 to 87 (HTFE…DHPN). The segment at 1–124 (MCVTSRADKM…NQSHNELGVE (124 aa)) is disordered. A run of 4 helical transmembrane segments spans residues 198–218 (IIGL…IIVV), 239–259 (LAYP…VSAF), 273–293 (GFLT…ALIL), and 326–346 (PWIV…VFVA).

It belongs to the TMEM237 family.

The protein resides in the membrane. It localises to the cell projection. Its subcellular location is the cilium. In terms of biological role, component of the transition zone in primary cilia. Required for ciliogenesis. This chain is Transmembrane protein 237A (tmem237a), found in Danio rerio (Zebrafish).